We begin with the raw amino-acid sequence, 215 residues long: Ras-related protein Rab-14 (215 aa).

The residue at position 2 (Ala-2) is an N-acetylalanine. The GTP site is built by Gly-21, Val-22, Gly-23, Lys-24, Ser-25, Cys-26, Ala-38, Asp-39, Cys-40, His-42, and Thr-43. Ser-25 contacts Mg(2+). A Switch 1 motif is present at residues 42-47 (HTIGVE). The Mg(2+) site is built by Thr-43 and Asp-66. The short motif at 68-77 (AGQERFRAVT) is the Switch 2 element. GTP-binding residues include Gly-69, Asn-124, Lys-125, Asp-127, Ala-155, and Lys-156. The segment at 188 to 215 (SGVQHKPSAPQGGRLTSEPQPQREGCGC) is disordered. 2 S-geranylgeranyl cysteine lipidation sites follow: Cys-213 and Cys-215. Cys-215 carries the cysteine methyl ester modification.

It belongs to the small GTPase superfamily. Rab family. As to quaternary structure, interacts with ZFYVE20. Interacts with KIF16B. Interacts (GTP-bound form) with RUFY1; the interaction recruits RUFY1 onto endosomal membranes. Interacts (GTP-bound form) with RAB11FIP1 (via its C-terminus); the interactions doesn't mediate RAB11FIP1 rectruitment to membranes. Interacts with RAB11FIP2. The cofactor is Mg(2+).

It is found in the recycling endosome. The protein resides in the early endosome membrane. Its subcellular location is the golgi apparatus membrane. The protein localises to the golgi apparatus. It localises to the trans-Golgi network membrane. It is found in the cytoplasmic vesicle. The protein resides in the phagosome. The enzyme catalyses GTP + H2O = GDP + phosphate + H(+). With respect to regulation, regulated by guanine nucleotide exchange factors (GEFs) including DENND6A and DENND6B which promote the exchange of bound GDP for free GTP. Regulated by GTPase activating proteins (GAPs) which increase the GTP hydrolysis activity. Inhibited by GDP dissociation inhibitors (GDIs) which prevent Rab-GDP dissociation. Functionally, the small GTPases Rab are key regulators of intracellular membrane trafficking, from the formation of transport vesicles to their fusion with membranes. Rabs cycle between an inactive GDP-bound form and an active GTP-bound form that is able to recruit to membranes different set of downstream effectors directly responsible for vesicle formation, movement, tethering and fusion. Involved in membrane trafficking between the Golgi complex and endosomes during early embryonic development. Regulates the Golgi to endosome transport of FGFR-containing vesicles during early development, a key process for developing basement membrane and epiblast and primitive endoderm lineages during early postimplantation development. May act by modulating the kinesin KIF16B-cargo association to endosomes. Regulates, together with its guanine nucleotide exchange factor DENND6A, the specific endocytic transport of ADAM10, N-cadherin/CDH2 shedding and cell-cell adhesion. Mediates endosomal tethering and fusion through the interaction with RUFY1 and RAB4B. Interaction with RAB11FIP1 may function in the process of neurite formation. In Sus scrofa (Pig), this protein is Ras-related protein Rab-14 (RAB14).